We begin with the raw amino-acid sequence, 256 residues long: Adenosine 5'-phosphosulfate reductase (256 aa).

[4Fe-4S] cluster contacts are provided by cysteine 120, cysteine 121, cysteine 203, and cysteine 206. Residue cysteine 231 is the Nucleophile; cysteine thiosulfonate intermediate of the active site.

Belongs to the PAPS reductase family. CysH subfamily. It depends on [4Fe-4S] cluster as a cofactor.

It is found in the cytoplasm. The catalysed reaction is [thioredoxin]-disulfide + sulfite + AMP + 2 H(+) = adenosine 5'-phosphosulfate + [thioredoxin]-dithiol. It participates in sulfur metabolism; hydrogen sulfide biosynthesis; sulfite from sulfate. Functionally, catalyzes the formation of sulfite from adenosine 5'-phosphosulfate (APS) using thioredoxin as an electron donor. The chain is Adenosine 5'-phosphosulfate reductase from Allochromatium vinosum (strain ATCC 17899 / DSM 180 / NBRC 103801 / NCIMB 10441 / D) (Chromatium vinosum).